We begin with the raw amino-acid sequence, 726 residues long: Catalase-peroxidase (726 aa).

A compositionally biased stretch (polar residues) spans 1-12 (MSTPSDQHNTLS). The segment at 1–34 (MSTPSDQHNTLSAGKCPFHQGNSNQTAGGGTSSR) is disordered. Positions 105 to 226 (WHSAGTYRSA…LGATEMGLIY (122 aa)) form a cross-link, tryptophyl-tyrosyl-methioninium (Trp-Tyr) (with M-252). Catalysis depends on His-106, which acts as the Proton acceptor. The tryptophyl-tyrosyl-methioninium (Tyr-Met) (with W-105) cross-link spans 226 to 252 (YVNPEGPNHSGDPASAAPAIRATFGNM). His-267 serves as a coordination point for heme b.

The protein belongs to the peroxidase family. Peroxidase/catalase subfamily. As to quaternary structure, homodimer or homotetramer. It depends on heme b as a cofactor. In terms of processing, formation of the three residue Trp-Tyr-Met cross-link is important for the catalase, but not the peroxidase activity of the enzyme.

The catalysed reaction is H2O2 + AH2 = A + 2 H2O. It carries out the reaction 2 H2O2 = O2 + 2 H2O. Bifunctional enzyme with both catalase and broad-spectrum peroxidase activity. This is Catalase-peroxidase from Cronobacter sakazakii (strain ATCC BAA-894) (Enterobacter sakazakii).